Consider the following 345-residue polypeptide: MIRVAIAGATGYTGAELVKLITGHKEAKLAAVTSQSYSGRAIQEIFPAMRGVVDLVCEPLDINAISQRVDCVFLALPHKVSMGYAPQFIENKVKVVDLSADFRFQNASAYEAAYQEHSAKSLLNEAVYGLCELYRDKIAGSNLVGNPGCYPTSVLLPLVPLVRKGLVETCGIISDSKSGVSGAGRAPSLGSHFCEVNESFKPYKIGNHRHVPEMEEVISLEANEPVSITFVPHLLPLTRGMLSTIYARVTTGTTQSMIRTALMDQYDSDTFVRVLPQGEFPDIRHVRGTNFCDIGFHLDPGSGQLILVSAIDNLLKGAAGQAVQNMNILFGLEEQTGLELFPGAL.

C149 is a catalytic residue.

Belongs to the NAGSA dehydrogenase family. Type 1 subfamily.

The protein localises to the cytoplasm. It catalyses the reaction N-acetyl-L-glutamate 5-semialdehyde + phosphate + NADP(+) = N-acetyl-L-glutamyl 5-phosphate + NADPH + H(+). It functions in the pathway amino-acid biosynthesis; L-arginine biosynthesis; N(2)-acetyl-L-ornithine from L-glutamate: step 3/4. Catalyzes the NADPH-dependent reduction of N-acetyl-5-glutamyl phosphate to yield N-acetyl-L-glutamate 5-semialdehyde. In Desulforapulum autotrophicum (strain ATCC 43914 / DSM 3382 / VKM B-1955 / HRM2) (Desulfobacterium autotrophicum), this protein is N-acetyl-gamma-glutamyl-phosphate reductase.